Reading from the N-terminus, the 162-residue chain is Sorting nexin-3 (162 aa).

The interval M1–P23 is disordered. The region spanning I38–V161 is the PX domain. The a 1,2-diacyl-sn-glycero-3-phospho-(1D-myo-inositol-3-phosphate) site is built by R81, S83, K112, and R127.

The protein belongs to the sorting nexin family. In terms of assembly, monomer. Interacts with RBD2, YIF1, YIP1 and YIP5.

Its subcellular location is the cytoplasm. It is found in the golgi apparatus membrane. The protein resides in the prevacuolar compartment membrane. Required for retention of late Golgi membrane proteins. Component of the retrieval machinery that functions by direct interaction with the cytosolic tails of certain TGN membrane proteins during the sorting/budding process at the prevacuolar compartment. Binds phosphatidylinositol 3-phosphate (PtdIns(P3)). In Saccharomyces cerevisiae (strain ATCC 204508 / S288c) (Baker's yeast), this protein is Sorting nexin-3 (SNX3).